A 214-amino-acid chain; its full sequence is Large ribosomal subunit protein bL25 (214 aa).

Residues 187–214 (AEVAPSIEETVEPEVIKKGKKAEEEEEK) form a disordered region. Basic and acidic residues predominate over residues 200–214 (EVIKKGKKAEEEEEK).

The protein belongs to the bacterial ribosomal protein bL25 family. CTC subfamily. Part of the 50S ribosomal subunit; part of the 5S rRNA/L5/L18/L25 subcomplex. Contacts the 5S rRNA. Binds to the 5S rRNA independently of L5 and L18.

This is one of the proteins that binds to the 5S RNA in the ribosome where it forms part of the central protuberance. The sequence is that of Large ribosomal subunit protein bL25 from Thermodesulfovibrio yellowstonii (strain ATCC 51303 / DSM 11347 / YP87).